We begin with the raw amino-acid sequence, 328 residues long: AA9 family lytic polysaccharide monooxygenase A (328 aa).

The first 21 residues, 1-21 (MPSTKVAALSAVLALASTVAG), serve as a signal peptide directing secretion. His-22 is a binding site for Cu(2+). A Methylhistidine modification is found at His-22. 2 cysteine pairs are disulfide-bonded: Cys-77/Cys-199 and Cys-118/Cys-122. Residue Asn-80 is glycosylated (N-linked (GlcNAc...) asparagine). His-107 is a Cu(2+) binding site. N-linked (GlcNAc...) asparagine glycans are attached at residues Asn-121 and Asn-159. Positions 185 and 194 each coordinate O2. Tyr-196 is a binding site for Cu(2+). Residues Ser-235 and Ser-237 are each glycosylated (O-linked (Man...) serine). Thr-238 and Thr-245 each carry an O-linked (Man...) threonine glycan.

Belongs to the polysaccharide monooxygenase AA9 family. Cu(2+) is required as a cofactor. Post-translationally, the catalytically essential N-terminal histidine His-22 is post-translationally modified by methylation to prevent protonation of the histidine side chain, and protect the critical active site of the enzyme from oxidative damage.

The protein resides in the secreted. It catalyses the reaction [(1-&gt;4)-beta-D-glucosyl]n+m + reduced acceptor + O2 = 4-dehydro-beta-D-glucosyl-[(1-&gt;4)-beta-D-glucosyl]n-1 + [(1-&gt;4)-beta-D-glucosyl]m + acceptor + H2O.. Functionally, lytic polysaccharide monooxygenase (LPMO) that depolymerizes crystalline and amorphous polysaccharides via the oxidation of scissile alpha- or beta-(1-4)-glycosidic bonds, yielding C1 and C4 oxidation products. Catalysis by LPMOs requires the reduction of the active-site copper from Cu(II) to Cu(I) by a reducing agent and H(2)O(2) or O(2) as a cosubstrate. Shows activity on cellulosic substrates (Avicel, carboxymethylcellulose) and xylan. This Talaromyces verruculosus (Penicillium verruculosum) protein is AA9 family lytic polysaccharide monooxygenase A.